The primary structure comprises 112 residues: Small ribosomal subunit protein bS6c (112 aa).

It belongs to the bacterial ribosomal protein bS6 family.

It is found in the plastid. The protein resides in the chloroplast. In terms of biological role, binds together with bS18 to 16S ribosomal RNA. This is Small ribosomal subunit protein bS6c (rps6) from Porphyra purpurea (Red seaweed).